A 333-amino-acid chain; its full sequence is Delta(9)-fatty-acid desaturase fat-5 (333 aa).

The next 4 helical transmembrane spans lie at 42-62, 66-86, 187-207, and 210-230; these read NVAL…QLVF, WATV…VTGG, LPLV…VLWG, and AFIA…HATW.

This sequence belongs to the fatty acid desaturase type 1 family. In terms of tissue distribution, expressed in the intestine in adult worms and in all four larval stages. Additional expression in the pharynx and tail cells after hatching and throughout the lifespan.

Its subcellular location is the membrane. The catalysed reaction is hexadecanoyl-CoA + 2 Fe(II)-[cytochrome b5] + O2 + 2 H(+) = (9Z)-hexadecenoyl-CoA + 2 Fe(III)-[cytochrome b5] + 2 H2O. The enzyme catalyses tetradecanoyl-CoA + 2 Fe(II)-[cytochrome b5] + O2 + 2 H(+) = (9Z)-tetradecenoyl-CoA + 2 Fe(III)-[cytochrome b5] + 2 H2O. It catalyses the reaction heptadecanoyl-CoA + 2 Fe(II)-[cytochrome b5] + O2 + 2 H(+) = (9Z)-heptadecenoyl-CoA + 2 Fe(III)-[cytochrome b5] + 2 H2O. It carries out the reaction pentadecanoyl-CoA + 2 Fe(II)-[cytochrome b5] + O2 + 2 H(+) = (9Z)-pentadecenoyl-CoA + 2 Fe(III)-[cytochrome b5] + 2 H2O. Its pathway is lipid metabolism; monounsaturated fatty acid biosynthesis. Its function is as follows. Delta(9)-fatty acid desaturase that acts preferentially on palmitoyl-CoA (hexadecanoyl-CoA) producing the monounsaturated palmitoleoyl-CoA ((9Z)-hexadecenoyl-CoA), which can be elongated to (11Z)-octadecenoyl-CoA (the most abundant monounsaturated fatty acid in Caenorhabditis elegans phospholipids and triacylglycerols). Also acts on pentadecanoyl-CoA, heptadecanoyl-CoA and myristoyl-CoA (tetradecanoyl-CoA), the monounsaturated fatty acids (MUFAs) produced are further used as substrates to synthesize polyunsaturated fatty acids (PUFAs) by several other desaturases and elongases. Unlike plants, Caenorhabditis elegans desaturases seem to use fatty acyl-CoAs as substrates. The polypeptide is Delta(9)-fatty-acid desaturase fat-5 (fat-5) (Caenorhabditis elegans).